A 37-amino-acid chain; its full sequence is MKVRPSVKPICEKCKIIKRKGRVMVICENPRHKQKQG.

Belongs to the bacterial ribosomal protein bL36 family.

The sequence is that of Large ribosomal subunit protein bL36 from Clostridium kluyveri (strain NBRC 12016).